The primary structure comprises 427 residues: Adenylosuccinate synthetase (427 aa).

Residues 12-18 and 40-42 each bind GTP; these read GDEGKGK and GHT. Catalysis depends on D13, which acts as the Proton acceptor. Mg(2+)-binding residues include D13 and G40. IMP-binding positions include 13–16, 38–41, T128, R142, Q223, T238, and R302; these read DEGK and NAGH. H41 (proton donor) is an active-site residue. 298–304 provides a ligand contact to substrate; sequence TTTGRPR. GTP is bound by residues R304, 330-332, and 412-414; these read SID and SVG.

This sequence belongs to the adenylosuccinate synthetase family. As to quaternary structure, homodimer. Mg(2+) is required as a cofactor.

It is found in the cytoplasm. It carries out the reaction IMP + L-aspartate + GTP = N(6)-(1,2-dicarboxyethyl)-AMP + GDP + phosphate + 2 H(+). It participates in purine metabolism; AMP biosynthesis via de novo pathway; AMP from IMP: step 1/2. In terms of biological role, plays an important role in the de novo pathway of purine nucleotide biosynthesis. Catalyzes the first committed step in the biosynthesis of AMP from IMP. This is Adenylosuccinate synthetase from Staphylococcus saprophyticus subsp. saprophyticus (strain ATCC 15305 / DSM 20229 / NCIMB 8711 / NCTC 7292 / S-41).